The primary structure comprises 66 residues: Beta-toxin Css6 (66 aa).

Residues 1 to 66 (KEGYLVNSYT…VWPLPNKTCN (66 aa)) form the LCN-type CS-alpha/beta domain. 4 cysteine pairs are disulfide-bonded: C12–C65, C16–C41, C25–C46, and C29–C48. N66 is subject to Asparagine amide.

Belongs to the long (4 C-C) scorpion toxin superfamily. Sodium channel inhibitor family. Beta subfamily. In terms of tissue distribution, expressed by the venom gland.

It is found in the secreted. Functionally, beta toxins bind voltage-independently at site-4 of sodium channels (Nav) and shift the voltage of activation toward more negative potentials thereby affecting sodium channel activation and promoting spontaneous and repetitive firing. This chain is Beta-toxin Css6, found in Centruroides suffusus (Durango bark scorpion).